A 391-amino-acid chain; its full sequence is Multidrug resistance protein MdtL (391 aa).

Helical transmembrane passes span 4–24, 42–62, 69–89, 93–113, 134–154, 158–178, 203–222, 245–265, 269–289, 293–313, 331–351, and 356–376; these read FLICSFALVLLYPAGIDMYLV, IAFSVYLAGMAAAMLFAGKVA, PVAIPGAALFIIASVFCSLAE, LFLAGRFLQGLGAGCCYVVAF, GITCIIPVLAPVLGHLIMLNF, SLFWTMAIMGVAVLMLSLFIL, FFLSRVVITTLSVSVILTFV, ALTAGVSMTVSFSTPFALGIF, TLMITSQVLFLAAGITLAVSP, VSLFGITLICAGFSVGFGVAM, LGIAQVCGSSLWIWLAAVVGI, and MLIGILIACSIVSLLLIMFVA.

The protein belongs to the major facilitator superfamily. DHA1 family. MdtL (TC 2.A.1.2.22) subfamily.

The protein localises to the cell inner membrane. Its function is as follows. Confers resistance to chloramphenicol. The protein is Multidrug resistance protein MdtL of Escherichia coli O81 (strain ED1a).